Here is a 144-residue protein sequence, read N- to C-terminus: Small ribosomal subunit protein eS17 (144 aa).

It belongs to the eukaryotic ribosomal protein eS17 family.

This chain is Small ribosomal subunit protein eS17 (RPS17), found in Solanum lycopersicum (Tomato).